We begin with the raw amino-acid sequence, 291 residues long: MAKLSPRDIKRKIQGIKNTKRITNAMKVVSAAKLRKAQELVYASRPYSEKLYELVGHLAAHVDTEDNPLFDVREERNVDVILVTADRGLAGAFNSNVIRTAENLIREKEEKGVKVSLILVGRKGFQYFTKRGYNVIKGYDEVFRKTVNFNVAKEVAEIVKERFLNGETDRVYLINNEMVTRASYKPQVRVFLPFEAQEKEVEELGTYEFEVSEEEFFDYIVNLYLNYQVYRAMVESNAAEHFARMIAMDNATKNAEDLIRQWTLVFNKARQEAITTELIDITNAVEALKAQ.

Belongs to the ATPase gamma chain family. F-type ATPases have 2 components, CF(1) - the catalytic core - and CF(0) - the membrane proton channel. CF(1) has five subunits: alpha(3), beta(3), gamma(1), delta(1), epsilon(1). CF(0) has three main subunits: a, b and c.

The protein localises to the cell inner membrane. Produces ATP from ADP in the presence of a proton gradient across the membrane. The gamma chain is believed to be important in regulating ATPase activity and the flow of protons through the CF(0) complex. In Aquifex aeolicus (strain VF5), this protein is ATP synthase gamma chain.